A 705-amino-acid chain; its full sequence is Elongation factor G 2 (705 aa).

A tr-type G domain is found at 8–288 (ERYRNIGISA…AVIDYLPSPA (281 aa)). Residues 17-24 (AHIDAGKT), 86-90 (DTPGH), and 140-143 (NKMD) each bind GTP.

Belongs to the TRAFAC class translation factor GTPase superfamily. Classic translation factor GTPase family. EF-G/EF-2 subfamily.

It is found in the cytoplasm. Catalyzes the GTP-dependent ribosomal translocation step during translation elongation. During this step, the ribosome changes from the pre-translocational (PRE) to the post-translocational (POST) state as the newly formed A-site-bound peptidyl-tRNA and P-site-bound deacylated tRNA move to the P and E sites, respectively. Catalyzes the coordinated movement of the two tRNA molecules, the mRNA and conformational changes in the ribosome. This Bordetella parapertussis (strain 12822 / ATCC BAA-587 / NCTC 13253) protein is Elongation factor G 2.